Consider the following 378-residue polypeptide: MSHVDDGFRSLTLKRFPQTDDVNPLLAWEAADEYLLQQLDETEIRGPVLILNDTFGALSCALAEHSPYSIGDSYLSELGTRENLRHNGIAESSVTFLDSTADYPQAPGVVLIKVPKTLALLEQQLRALRKVVTAQTRIIAGAKARDIHTSTLELFEKVLGPTTTTLAWKKARLINCTFSHPQLADAPQTLSWKLEDTGWTIHNHANVFSRTGLDIGARFFMQHLPENLDGEIVDLGCGNGVIGLSLLAKNPQANVVFVDESPMAVDSSRLNVETNLPEAFERCEFMINNALSGVEPFRFNAVFCNPPFHQKHALTDNIAWEMFHHARRCLKINGELYIVANRHLDYFHKLKKIFGNCATIATNNKFVILKAVKQGHRR.

It belongs to the methyltransferase superfamily. RlmG family.

The protein localises to the cytoplasm. The enzyme catalyses guanosine(1835) in 23S rRNA + S-adenosyl-L-methionine = N(2)-methylguanosine(1835) in 23S rRNA + S-adenosyl-L-homocysteine + H(+). Its function is as follows. Specifically methylates the guanine in position 1835 (m2G1835) of 23S rRNA. This is Ribosomal RNA large subunit methyltransferase G from Salmonella dublin (strain CT_02021853).